A 249-amino-acid polypeptide reads, in one-letter code: uncharacterized protein (249 aa).

This sequence belongs to the AIM2 family.

The protein localises to the cytoplasm. Its subcellular location is the nucleus. This is an uncharacterized protein from Schizosaccharomyces pombe (strain 972 / ATCC 24843) (Fission yeast).